A 64-amino-acid chain; its full sequence is Large ribosomal subunit protein bL35 (64 aa).

Residues 18–39 (GSGLVKHYPSNKHHKNTHKKEN) form a disordered region. A compositionally biased stretch (basic residues) spans 26–39 (PSNKHHKNTHKKEN).

Belongs to the bacterial ribosomal protein bL35 family.

This Symbiobacterium thermophilum (strain DSM 24528 / JCM 14929 / IAM 14863 / T) protein is Large ribosomal subunit protein bL35.